Consider the following 430-residue polypeptide: MNVKVENIEKNVVKLEITVDSEKFNEAVKKSFKKNAKRFNVPGFRKGKAPLNIIKKYYGEGVLFEDAINFCCEDTYPKAIEENNIKPVDYPQIDVVQIGEGKDFIYTAEVTTVPEVKLGEYKGVEVKKVSYEVEDEAVENELKSMQEKNARVSLKEEGEIEKGNIAIIDFKGYVDGKAFEGGEAKDYEIEIGSGTFIGDFEDQLVGLKKDESKEVNVSFPEEYGREDLNGKPATFEVTIKDIKVKELPALDDEFAKEVSEFDTLEELKSDIKDRMKKELSEKAKAEYEEAVVEAVGANAEIEIPKVMIEKEIENMVRDLEMRLKYQGLDLKSYYEFTNSSEEKVKEYMRETAEKRVKTDLIMQEIAKVEDIKATEEELKEKAMEVAKQYGQKDVEKTAELIANAQKAYLEIDIVNGKVLDLLVENSKEIA.

The region spanning 163–248 (GNIAIIDFKG…IKDIKVKELP (86 aa)) is the PPIase FKBP-type domain.

It belongs to the FKBP-type PPIase family. Tig subfamily.

It is found in the cytoplasm. The enzyme catalyses [protein]-peptidylproline (omega=180) = [protein]-peptidylproline (omega=0). Involved in protein export. Acts as a chaperone by maintaining the newly synthesized protein in an open conformation. Functions as a peptidyl-prolyl cis-trans isomerase. The chain is Trigger factor from Clostridium botulinum (strain Okra / Type B1).